We begin with the raw amino-acid sequence, 319 residues long: Dehydrogenase/reductase SDR family member 9 (319 aa).

The signal sequence occupies residues 1–20 (MLLWVLALLFLCAFLWNYKG). NAD(+)-binding positions include 34 to 58 (ITGC…RVIA) and Asp-83. Substrate is bound at residue Ser-164. Catalysis depends on Tyr-176, which acts as the Proton acceptor. Lys-180 contacts NAD(+).

It belongs to the short-chain dehydrogenases/reductases (SDR) family. As to quaternary structure, homotetramer. As to expression, highly expressed in epithelium of estrus uterus.

It localises to the microsome membrane. The protein localises to the endoplasmic reticulum membrane. The catalysed reaction is 3beta-hydroxy-5alpha-pregnane-20-one + NAD(+) = 5alpha-pregnane-3,20-dione + NADH + H(+). It carries out the reaction 17beta-hydroxy-5alpha-androstan-3-one + NAD(+) = 5alpha-androstan-3,17-dione + NADH + H(+). The enzyme catalyses androsterone + NAD(+) = 5alpha-androstan-3,17-dione + NADH + H(+). It catalyses the reaction 5alpha-androstane-3alpha,17beta-diol + NAD(+) = 17beta-hydroxy-5alpha-androstan-3-one + NADH + H(+). The catalysed reaction is all-trans-retinol + NAD(+) = all-trans-retinal + NADH + H(+). It carries out the reaction 3alpha-hydroxy-5alpha-pregnan-20-one + NAD(+) = 5alpha-pregnane-3,20-dione + NADH + H(+). 3-alpha-hydroxysteroid dehydrogenase that converts 3-alpha-tetrahydroprogesterone (allopregnanolone) to dihydroxyprogesterone and 3-alpha-androstanediol to dihydroxyprogesterone. Plays also role in the biosynthesis of retinoic acid from retinaldehyde. Can utilize both NADH and NADPH. This Rattus norvegicus (Rat) protein is Dehydrogenase/reductase SDR family member 9 (Dhrs9).